Reading from the N-terminus, the 359-residue chain is Aromatic amino acid aminotransferase (359 aa).

The span at M1–L12 shows a compositional bias: basic and acidic residues. Positions M1–G21 are disordered. N6-(pyridoxal phosphate)lysine is present on K223.

The protein belongs to the class-II pyridoxal-phosphate-dependent aminotransferase family. As to quaternary structure, homodimer. It depends on pyridoxal 5'-phosphate as a cofactor.

It catalyses the reaction an aromatic L-alpha-amino acid + 2-oxoglutarate = an aromatic oxo-acid + L-glutamate. Aminotransferase that catalyzes the conversion of aromatic amino acids and 2-oxoglutarate into corresponding aromatic oxo acids and L-glutamate. The chain is Aromatic amino acid aminotransferase from Streptomyces coelicolor (strain ATCC BAA-471 / A3(2) / M145).